The primary structure comprises 185 residues: MTRHCDVSIPDSPEPPFPITTSFVDVIAGFGRGSAELGIPTANVPIDDLPKIVEQLDTGVYFGWCKVRMAKDRDTKVEQRPDGREVQYNNGTLLNDEDLAVLPVVLSVGWNPFYQNKNKTVELHIIHKFSDNFYGAQIKFNFLGYIRPELDYTTKDALIADIHTDIEIAKEKLQLPGYRKLKDTL.

2 residues coordinate Mg(2+): threonine 41 and asparagine 43. The active-site Nucleophile is the glutamate 122.

Belongs to the flavokinase family. Zn(2+) serves as cofactor. It depends on Mg(2+) as a cofactor.

The enzyme catalyses riboflavin + ATP = FMN + ADP + H(+). The protein operates within cofactor biosynthesis; FMN biosynthesis; FMN from riboflavin (ATP route): step 1/1. Its function is as follows. Catalyzes the phosphorylation of riboflavin (vitamin B2) to form flavin mononucleotide (FMN) coenzyme. The chain is Riboflavin kinase (FMN1) from Kluyveromyces lactis (strain ATCC 8585 / CBS 2359 / DSM 70799 / NBRC 1267 / NRRL Y-1140 / WM37) (Yeast).